Here is a 295-residue protein sequence, read N- to C-terminus: GDP-polyphosphate phosphotransferase (295 aa).

The tract at residues 1–28 (MDIPSVDVSTATNDGASSRAKGHRSAAP) is disordered. The segment covering 7 to 16 (DVSTATNDGA) has biased composition (polar residues). His115 and His247 each carry phosphohistidine.

The protein belongs to the polyphosphate kinase 2 (PPK2) family. Class I subfamily. As to quaternary structure, interacts with Ndk. Post-translationally, autophosphorylated at His-115 and His-247 using polyP as a phosphate donor.

It carries out the reaction [phosphate](n) + GTP = [phosphate](n+1) + GDP. Functionally, uses inorganic polyphosphate (polyP) as a donor to convert GDP to GTP. In addition, modulates nucleotide triphosphate synthesis catalyzed by the nucleoside diphosphate kinase (Ndk) in favor of GTP production over CTP or UTP. Plays an important role in survival of M.tuberculosis in macrophages. This Mycobacterium tuberculosis (strain ATCC 25618 / H37Rv) protein is GDP-polyphosphate phosphotransferase.